Here is a 333-residue protein sequence, read N- to C-terminus: Potassium channel protein 1 (333 aa).

Residues 1–6 (METYEK) are Cytoplasmic-facing. The helical transmembrane segment at 7–27 (IELGIIVIILLILIESVILMT) threads the bilayer. Over 28-60 (VEGWDFFTAFYTAVVTISTVGYGDYTPQTFLGK) the chain is Extracellular. The short motif at 46 to 51 (TVGYGD) is the Selectivity filter element. A helical transmembrane segment spans residues 61–81 (LSVIIYIFAGVGAVAYTMGNI). Over 82-333 (ASFFIEGHFR…KLKRYVEGVE (252 aa)) the chain is Cytoplasmic. The RCK N-terminal domain maps to 107-229 (NNHYIICGYG…GADRAVCPYI (123 aa)). Residues 246 to 331 (EFIHSLVATE…LEKLKRYVEG (86 aa)) form the RCK C-terminal domain.

In terms of assembly, homotetramer.

The protein resides in the cell membrane. Functionally, potassium channel protein. Seems to conduct potassium at low membrane potentials. This is Potassium channel protein 1 from Methanocaldococcus jannaschii (strain ATCC 43067 / DSM 2661 / JAL-1 / JCM 10045 / NBRC 100440) (Methanococcus jannaschii).